The primary structure comprises 451 residues: Chromosomal replication initiator protein DnaA (451 aa).

The segment at 1-82 (MENSLWKQCL…RLELQIGSSA (82 aa)) is domain I, interacts with DnaA modulators. The interval 82 to 114 (AVVAPPRRRQVSVTTPSPSAAADQTPATRSAAS) is domain II. Residues 85–112 (APPRRRQVSVTTPSPSAAADQTPATRSA) form a disordered region. Residues 115-331 (NLNSNFTFDT…GALRRVVANA (217 aa)) form a domain III, AAA+ region region. Positions 159, 161, 162, and 163 each coordinate ATP. A domain IV, binds dsDNA region spans residues 332 to 451 (QFTGQEITVE…YSNLLRTLST (120 aa)).

The protein belongs to the DnaA family. In terms of assembly, oligomerizes as a right-handed, spiral filament on DNA at oriC.

The protein resides in the cytoplasm. Its function is as follows. Plays an essential role in the initiation and regulation of chromosomal replication. ATP-DnaA binds to the origin of replication (oriC) to initiate formation of the DNA replication initiation complex once per cell cycle. Binds the DnaA box (a 9 base pair repeat at the origin) and separates the double-stranded (ds)DNA. Forms a right-handed helical filament on oriC DNA; dsDNA binds to the exterior of the filament while single-stranded (ss)DNA is stabiized in the filament's interior. The ATP-DnaA-oriC complex binds and stabilizes one strand of the AT-rich DNA unwinding element (DUE), permitting loading of DNA polymerase. After initiation quickly degrades to an ADP-DnaA complex that is not apt for DNA replication. Binds acidic phospholipids. In Alkalilimnicola ehrlichii (strain ATCC BAA-1101 / DSM 17681 / MLHE-1), this protein is Chromosomal replication initiator protein DnaA.